The primary structure comprises 87 residues: MANIKSQIKRNKTNEKARLRNQAIRSAVRTEIRKFHAAIDGGDKAAAESQLRVASRALDKAVTKGVFHRNNAANKKSSLARAFNKLG.

The segment at 1-20 (MANIKSQIKRNKTNEKARLR) is disordered.

This sequence belongs to the bacterial ribosomal protein bS20 family.

Functionally, binds directly to 16S ribosomal RNA. The protein is Small ribosomal subunit protein bS20 of Corynebacterium efficiens (strain DSM 44549 / YS-314 / AJ 12310 / JCM 11189 / NBRC 100395).